Consider the following 1204-residue polypeptide: DNA-directed RNA polymerase subunit beta' (1204 aa).

Zn(2+) contacts are provided by Cys60, Cys62, Cys75, and Cys78. Mg(2+)-binding residues include Asp449, Asp451, and Asp453. 4 residues coordinate Zn(2+): Cys819, Cys893, Cys900, and Cys903.

It belongs to the RNA polymerase beta' chain family. In terms of assembly, the RNAP catalytic core consists of 2 alpha, 1 beta, 1 beta' and 1 omega subunit. When a sigma factor is associated with the core the holoenzyme is formed, which can initiate transcription. The cofactor is Mg(2+). It depends on Zn(2+) as a cofactor.

It catalyses the reaction RNA(n) + a ribonucleoside 5'-triphosphate = RNA(n+1) + diphosphate. DNA-dependent RNA polymerase catalyzes the transcription of DNA into RNA using the four ribonucleoside triphosphates as substrates. This chain is DNA-directed RNA polymerase subunit beta', found in Bacillus cytotoxicus (strain DSM 22905 / CIP 110041 / 391-98 / NVH 391-98).